The primary structure comprises 681 residues: UvrABC system protein B (681 aa).

The 390-residue stretch at 30 to 419 (QGVRDGRHWQ…GEVVELLVRP (390 aa)) folds into the Helicase ATP-binding domain. 43-50 (GVTGSGKT) lines the ATP pocket. The short motif at 96–119 (YYDFYQPEAYLPSLDKYIAKDLRI) is the Beta-hairpin element. The Helicase C-terminal domain occupies 435–601 (QIDNLLAEIR…SIVKSVDQIL (167 aa)). Positions 641 to 676 (YAIVEGLRLEMQEAAEHMEYEKAAYLRDEITKMEQV) constitute a UVR domain.

This sequence belongs to the UvrB family. Forms a heterotetramer with UvrA during the search for lesions. Interacts with UvrC in an incision complex.

It is found in the cytoplasm. In terms of biological role, the UvrABC repair system catalyzes the recognition and processing of DNA lesions. A damage recognition complex composed of 2 UvrA and 2 UvrB subunits scans DNA for abnormalities. Upon binding of the UvrA(2)B(2) complex to a putative damaged site, the DNA wraps around one UvrB monomer. DNA wrap is dependent on ATP binding by UvrB and probably causes local melting of the DNA helix, facilitating insertion of UvrB beta-hairpin between the DNA strands. Then UvrB probes one DNA strand for the presence of a lesion. If a lesion is found the UvrA subunits dissociate and the UvrB-DNA preincision complex is formed. This complex is subsequently bound by UvrC and the second UvrB is released. If no lesion is found, the DNA wraps around the other UvrB subunit that will check the other stand for damage. The sequence is that of UvrABC system protein B from Chlorobium chlorochromatii (strain CaD3).